Here is a 291-residue protein sequence, read N- to C-terminus: Beta-lactamase CTX-M-8 (291 aa).

An N-terminal signal peptide occupies residues 1–30 (MMRHRVKRMMLMTTACISLLLGSAPLYAQA). Catalysis depends on Ser-73, which acts as the Nucleophile; acyl-ester intermediate. A beta-lactam is bound by residues Lys-76, Ser-133, Glu-169, and Ser-240.

Belongs to the class-A beta-lactamase family. As to quaternary structure, monomer.

The protein localises to the secreted. It catalyses the reaction a beta-lactam + H2O = a substituted beta-amino acid. Inhibited by the beta-lactamase-blocking agents clavulanic acid, tazobactam and sulbactam; in the DH5alpha strain of E.coli. Functionally, extended-spectrum beta-lactamase (ESBL) which confers resistance to penicillins, as well as first, third and fourth-generation cephalosporins. Has cefotaxime-hydrolyzing activity. Inactive against cephalosporin antibiotic, cefoxitin, and the carbapenem, imipenem. The protein is Beta-lactamase CTX-M-8 of Citrobacter amalonaticus.